Here is a 285-residue protein sequence, read N- to C-terminus: BAG family molecular chaperone regulator 2 (285 aa).

The Ubiquitin-like domain occupies 37-113 (RGIRVRVKYG…LILIEDPISQ (77 aa)). The region spanning 132–210 (AISDISFQVE…KYVEALDLLK (79 aa)) is the BAG domain. S244 is subject to Phosphoserine.

As to quaternary structure, binds to the ATPase domain of HSP70/HSC70 chaperones.

Its function is as follows. Co-chaperone that regulates diverse cellular pathways, such as programmed cell death and stress responses. In Arabidopsis thaliana (Mouse-ear cress), this protein is BAG family molecular chaperone regulator 2 (BAG2).